The sequence spans 119 residues: Large ribosomal subunit protein uL18 (119 aa).

The protein belongs to the universal ribosomal protein uL18 family. Part of the 50S ribosomal subunit; part of the 5S rRNA/L5/L18/L25 subcomplex. Contacts the 5S and 23S rRNAs.

Its function is as follows. This is one of the proteins that bind and probably mediate the attachment of the 5S RNA into the large ribosomal subunit, where it forms part of the central protuberance. The chain is Large ribosomal subunit protein uL18 from Clostridium botulinum (strain Alaska E43 / Type E3).